Consider the following 181-residue polypeptide: Adenylate kinase (181 aa).

Position 10–15 (10–15 (GAGKGT)) interacts with ATP. An NMP region spans residues 30-59 (STGDLFRSNISEGTELGLQAKQYLDAGDLV). AMP contacts are provided by residues T31, R36, 57–59 (DLV), 85–88 (GFPR), and Q92. The tract at residues 126–132 (GRGRADD) is LID. R127 is an ATP binding site. AMP contacts are provided by R129 and R140. G166 contributes to the ATP binding site.

This sequence belongs to the adenylate kinase family. Monomer.

It is found in the cytoplasm. The enzyme catalyses AMP + ATP = 2 ADP. Its pathway is purine metabolism; AMP biosynthesis via salvage pathway; AMP from ADP: step 1/1. Catalyzes the reversible transfer of the terminal phosphate group between ATP and AMP. Plays an important role in cellular energy homeostasis and in adenine nucleotide metabolism. The polypeptide is Adenylate kinase (Mycobacteroides abscessus (strain ATCC 19977 / DSM 44196 / CCUG 20993 / CIP 104536 / JCM 13569 / NCTC 13031 / TMC 1543 / L948) (Mycobacterium abscessus)).